A 36-amino-acid chain; its full sequence is Photosystem II reaction center protein M (36 aa).

Residues 7–27 traverse the membrane as a helical segment; sequence GFVASLMFVLVPTVFLIVLFI.

The protein belongs to the PsbM family. PSII is composed of 1 copy each of membrane proteins PsbA, PsbB, PsbC, PsbD, PsbE, PsbF, PsbH, PsbI, PsbJ, PsbK, PsbL, PsbM, PsbT, PsbX, PsbY, PsbZ, Psb30/Ycf12, peripheral proteins PsbO, CyanoQ (PsbQ), PsbU, PsbV and a large number of cofactors. It forms dimeric complexes.

It is found in the cellular thylakoid membrane. One of the components of the core complex of photosystem II (PSII). PSII is a light-driven water:plastoquinone oxidoreductase that uses light energy to abstract electrons from H(2)O, generating O(2) and a proton gradient subsequently used for ATP formation. It consists of a core antenna complex that captures photons, and an electron transfer chain that converts photonic excitation into a charge separation. This subunit is found at the monomer-monomer interface. The chain is Photosystem II reaction center protein M from Synechococcus sp. (strain CC9311).